The following is a 132-amino-acid chain: Myelin P2 protein (132 aa).

At Ser-2 the chain carries N-acetylserine. Arg-107 serves as a coordination point for (9Z)-octadecenoate. Arg-107 is a binding site for hexadecanoate. Cys-118 and Cys-125 form a disulfide bridge. Residue 127-129 participates in (9Z)-octadecenoate binding; it reads RIY. A hexadecanoate-binding site is contributed by 127–129; the sequence is RIY.

It belongs to the calycin superfamily. Fatty-acid binding protein (FABP) family. Monomer. As to expression, detected in spinal cord (at protein level).

It localises to the cytoplasm. In terms of biological role, may play a role in lipid transport protein in Schwann cells. May bind cholesterol. The sequence is that of Myelin P2 protein (PMP2) from Equus caballus (Horse).